The chain runs to 423 residues: Acaloleptin A (423 aa).

The N-terminal stretch at 1–17 is a signal peptide; it reads MITKISLILFAVLLVSG. Residues 18–26 constitute a propeptide that is removed on maturation; that stretch reads LEEEERWKR. Disordered regions lie at residues 28 to 58, 108 to 128, 180 to 203, and 355 to 385; these read LQPG…NTKT, INNK…DNGN, NVNN…GNTR, and SDDE…TRAD. Positions 34–43 are enriched in polar residues; that stretch reads NVNNNDQPWQ. Over residues 180–189 the composition is skewed to polar residues; the sequence is NVNNKDQPWQ. Over residues 357–366 the composition is skewed to acidic residues; that stretch reads DEDEEEEEDQ. Over residues 376–385 the composition is skewed to basic and acidic residues; it reads RGDDGNTRAD.

The protein belongs to the coleoptericin family. Hemolymph (at protein level). Larval fat body.

The protein localises to the secreted. Acaloleptins A1-A4 show antibacterial activity against Gram-negative bacteria but not against Gram-positive bacteria. Acaloleptin A5 shows antibacterial activity against Gram-positive bacteria but not against Gram-negative bacteria, and may also have antifungal activity. This Acalolepta luxuriosa (Udo longhorn beetle) protein is Acaloleptin A.